An 817-amino-acid chain; its full sequence is Exocyst complex component 6 (817 aa).

Coiled-coil stretches lie at residues 87 to 149 (QSFV…DQIA) and 247 to 270 (TDAERAKKIQEEARKNASNVEIEV).

The protein belongs to the SEC15 family. As to quaternary structure, the exocyst complex is composed of sec-3/exoc1, sec-5/exoc2, sec-6/exoc3, sec-8/exoc4, sec-10/exoc5, sec-15/exoc6, exo-70/exoc7 and exo-84/exoc8.

Component of the exocyst complex involved in the docking of exocytic vesicles with fusion sites on the plasma membrane. The sequence is that of Exocyst complex component 6 (sec-15) from Caenorhabditis elegans.